The primary structure comprises 395 residues: Envelope glycoprotein D (395 aa).

A signal peptide spans 1-17; that stretch reads MGSGIAAVLLSLAVALA. At 18 to 342 the chain is on the virion surface side; sequence RVPAGEGEYV…PAPAPSGHTG (325 aa). H63 provides a ligand contact to Zn(2+). Disulfide bonds link C90–C214, C131–C227, and C143–C152. Residue N119 is glycosylated (N-linked (GlcNAc...) asparagine; by host). D240 is a binding site for Zn(2+). Positions 261 to 306 are profusion; the sequence is LQAAGWHGPKAPFTSTLLPPEVVETANVTRPELAPEERGTSRTPGD. N287 carries an N-linked (GlcNAc...) asparagine; by host glycan. A disordered region spans residues 289–314; the sequence is TRPELAPEERGTSRTPGDEPAPAVAA. The helical transmembrane segment at 343-362 threads the bilayer; that stretch reads AVVGALAGAGLAAGVVVLAV. Residues 363–395 are Intravirion-facing; that stretch reads YLVRRRGRAAGKHVRLPELLEEAHGPARRGAPY.

The protein belongs to the herpesviridae glycoprotein D family.

Its subcellular location is the virion membrane. In terms of biological role, envelope glycoprotein that binds to host cell entry receptors, promoting the virus entry into host cells. May trigger fusion with host membrane, by recruiting the fusion machinery composed of gB and gH/gL. This is Envelope glycoprotein D (gD) from Cercopithecine herpesvirus 1 (CeHV-1).